The following is a 134-amino-acid chain: Holo-[acyl-carrier-protein] synthase (134 aa).

D8 and E57 together coordinate Mg(2+).

This sequence belongs to the P-Pant transferase superfamily. AcpS family. The cofactor is Mg(2+).

The protein localises to the cytoplasm. The catalysed reaction is apo-[ACP] + CoA = holo-[ACP] + adenosine 3',5'-bisphosphate + H(+). In terms of biological role, transfers the 4'-phosphopantetheine moiety from coenzyme A to a Ser of acyl-carrier-protein. The chain is Holo-[acyl-carrier-protein] synthase from Rhizobium etli (strain CIAT 652).